We begin with the raw amino-acid sequence, 340 residues long: L-galactonate-5-dehydrogenase (340 aa).

Residues Cys40, Cys65, Cys92, Cys95, Cys98, Cys106, and Glu146 each contribute to the Zn(2+) site.

It belongs to the zinc-containing alcohol dehydrogenase family. Zn(2+) is required as a cofactor.

The catalysed reaction is L-galactonate + NAD(+) = keto-D-tagaturonate + NADH + H(+). Its activity is regulated as follows. Inhibited by EDTA. Its function is as follows. Catalyzes the oxidation of L-galactonate to D-tagaturonate. Required for growth on L-galactonate as the sole carbon source. In vitro, can also use L-gulonate. This is L-galactonate-5-dehydrogenase (lgoD) from Escherichia coli (strain K12).